The sequence spans 251 residues: Imidazole glycerol phosphate synthase subunit HisF (251 aa).

Active-site residues include aspartate 11 and aspartate 130.

This sequence belongs to the HisA/HisF family. In terms of assembly, heterodimer of HisH and HisF.

It localises to the cytoplasm. The enzyme catalyses 5-[(5-phospho-1-deoxy-D-ribulos-1-ylimino)methylamino]-1-(5-phospho-beta-D-ribosyl)imidazole-4-carboxamide + L-glutamine = D-erythro-1-(imidazol-4-yl)glycerol 3-phosphate + 5-amino-1-(5-phospho-beta-D-ribosyl)imidazole-4-carboxamide + L-glutamate + H(+). It functions in the pathway amino-acid biosynthesis; L-histidine biosynthesis; L-histidine from 5-phospho-alpha-D-ribose 1-diphosphate: step 5/9. In terms of biological role, IGPS catalyzes the conversion of PRFAR and glutamine to IGP, AICAR and glutamate. The HisF subunit catalyzes the cyclization activity that produces IGP and AICAR from PRFAR using the ammonia provided by the HisH subunit. The chain is Imidazole glycerol phosphate synthase subunit HisF from Prosthecochloris aestuarii (strain DSM 271 / SK 413).